The primary structure comprises 138 residues: uncharacterized protein (138 aa).

This is an uncharacterized protein from Acanthamoeba polyphaga mimivirus (APMV).